A 583-amino-acid polypeptide reads, in one-letter code: Interactor of constitutive active ROPs 2, chloroplastic (583 aa).

The transit peptide at 1-55 directs the protein to the chloroplast; sequence MQTPKPRPGSLEVPQKKSPASTPKTARKLKTSESDPVSSPNTKIRTPKTQSPKVV. 2 disordered regions span residues 1–80 and 101–125; these read MQTP…PELA and EALKKEAQDQAEETKQQLMEINASE. The segment covering 34 to 52 has biased composition (polar residues); it reads SDPVSSPNTKIRTPKTQSP. Coiled-coil stretches lie at residues 74–207 and 238–516; these read GKTP…DAKE and MKMS…AAAT. Over residues 102–115 the composition is skewed to basic and acidic residues; sequence ALKKEAQDQAEETK. Residues 518 to 583 are disordered; it reads LSGGNNNNNS…IGVLLKKSQK (66 aa). Residues 519 to 529 show a composition bias toward low complexity; that stretch reads SGGNNNNNSNG. Ser540 is subject to Phosphoserine.

The protein belongs to the ICR family. As to quaternary structure, interacts with ARAC8, ARAC11 and KIN13A in vitro, but not with ICR1 or SEC3A.

Its subcellular location is the plastid. The protein localises to the chloroplast. In terms of biological role, acts as a scaffold, mediating interaction of ROPs with different proteins. This is Interactor of constitutive active ROPs 2, chloroplastic (ICR2) from Arabidopsis thaliana (Mouse-ear cress).